The sequence spans 85 residues: Colicin-E8 immunity protein in ColE6 (85 aa).

This sequence belongs to the colicins ColE2/ColE8/ColE9 and pyocins S1/S2 family.

The chain is Colicin-E8 immunity protein in ColE6 (imm) from Escherichia coli.